We begin with the raw amino-acid sequence, 515 residues long: Germ cell-less protein-like 1 (515 aa).

Residues 1–35 (MGSLSSRVLRQPRPALAQQAQGARAGGSARRPDTG) are disordered. Over residues 11 to 29 (QPRPALAQQAQGARAGGSA) the composition is skewed to low complexity. The Nuclear localization signal motif lies at 49 to 55 (SHKRKRS). The disordered stretch occupies residues 65 to 85 (DSETDEDEEEGDEQQRLLNTP). At Ser66 the chain carries Phosphoserine. Positions 67–76 (ETDEDEEEGD) are enriched in acidic residues. Thr68 carries the post-translational modification Phosphothreonine. Positions 85-91 (PRRKKLK) match the Nuclear localization signal motif. The BTB domain maps to 108 to 178 (SDIKICALGE…LYRDDVLIKP (71 aa)).

In terms of assembly, interacts with TMPO-beta, TSG101 and TFDP2. Interacts with EMD.

It is found in the nucleus matrix. Functionally, possible function in spermatogenesis. Enhances the degradation of MDM2 and increases the amount of p53 probably by modulating the nucleocytoplasmic transport. The sequence is that of Germ cell-less protein-like 1 (GMCL1) from Homo sapiens (Human).